The primary structure comprises 87 residues: Exendin-4 (87 aa).

The signal sequence occupies residues 1 to 23 (MKIILWLCVFGLFLATLFPISWQ). Positions 24–45 (MPVESGLSSEDSASSESFASKI) are excised as a propeptide. Ser-86 is modified (serine amide).

Belongs to the glucagon family. As to expression, expressed by the venom gland.

The protein resides in the secreted. Functionally, venom protein that mimics the incretin hormone glucagon-like peptide 1 (GLP-1). It stimulates insulin synthesis and secretion, protects against beta-cell apoptosis in response to different insults, and promotes beta-cell proliferation It also promotes satiety, reduces food intake, reduces fat deposition, reduces body weight and inhibits gastric emptying. Interacts with GLP-1 receptor (GLP1R). Induces hypotension that is mediated by relaxation of cardiac smooth muscle. This is Exendin-4 from Heloderma suspectum cinctum (Banded Gila monster).